Here is a 691-residue protein sequence, read N- to C-terminus: Elongation factor G (691 aa).

The 275-residue stretch at 8 to 282 (NKTRNIGIMA…AVVEFLPAPV (275 aa)) folds into the tr-type G domain. GTP is bound by residues 17 to 24 (AHIDAGKT), 81 to 85 (DTPGH), and 135 to 138 (NKMD).

It belongs to the TRAFAC class translation factor GTPase superfamily. Classic translation factor GTPase family. EF-G/EF-2 subfamily.

It localises to the cytoplasm. Catalyzes the GTP-dependent ribosomal translocation step during translation elongation. During this step, the ribosome changes from the pre-translocational (PRE) to the post-translocational (POST) state as the newly formed A-site-bound peptidyl-tRNA and P-site-bound deacylated tRNA move to the P and E sites, respectively. Catalyzes the coordinated movement of the two tRNA molecules, the mRNA and conformational changes in the ribosome. This is Elongation factor G from Heliobacterium modesticaldum (strain ATCC 51547 / Ice1).